Here is a 122-residue protein sequence, read N- to C-terminus: Large ribosomal subunit protein uL14 (122 aa).

The protein belongs to the universal ribosomal protein uL14 family. In terms of assembly, part of the 50S ribosomal subunit. Forms a cluster with proteins L3 and L19. In the 70S ribosome, L14 and L19 interact and together make contacts with the 16S rRNA in bridges B5 and B8.

Its function is as follows. Binds to 23S rRNA. Forms part of two intersubunit bridges in the 70S ribosome. This chain is Large ribosomal subunit protein uL14, found in Moorella thermoacetica (strain ATCC 39073 / JCM 9320).